A 602-amino-acid chain; its full sequence is UvrABC system protein C (602 aa).

Residues 17–94 form the GIY-YIG domain; it reads KTSGCYKMYS…IKKYKPTYNI (78 aa). The 36-residue stretch at 199–234 folds into the UVR domain; sequence SKLLNDIEIKMKEVIMKENFEAAIKLKETKKSLIEI.

It belongs to the UvrC family. In terms of assembly, interacts with UvrB in an incision complex.

It localises to the cytoplasm. The UvrABC repair system catalyzes the recognition and processing of DNA lesions. UvrC both incises the 5' and 3' sides of the lesion. The N-terminal half is responsible for the 3' incision and the C-terminal half is responsible for the 5' incision. The polypeptide is UvrABC system protein C (Borrelia duttonii (strain Ly)).